The chain runs to 245 residues: Nicotinamide/nicotinic acid mononucleotide adenylyltransferase 3 (245 aa).

Serine 14 and phenylalanine 15 together coordinate NAD(+). Residues histidine 22 and lysine 56 each coordinate ATP. 4 residues coordinate NAD(+): tryptophan 90, threonine 93, glycine 134, and aspartate 136. Lysine 139 is a binding site for ATP. Positions 146, 147, 166, and 197 each coordinate NAD(+). 202–205 provides a ligand contact to ATP; sequence TYVR.

This sequence belongs to the eukaryotic NMN adenylyltransferase family. Homotetramer. Requires Mg(2+) as cofactor.

Its subcellular location is the mitochondrion. It carries out the reaction beta-nicotinamide D-ribonucleotide + ATP + H(+) = diphosphate + NAD(+). It catalyses the reaction nicotinate beta-D-ribonucleotide + ATP + H(+) = deamido-NAD(+) + diphosphate. The protein operates within cofactor biosynthesis; NAD(+) biosynthesis; NAD(+) from nicotinamide D-ribonucleotide: step 1/1. It participates in cofactor biosynthesis; NAD(+) biosynthesis; deamido-NAD(+) from nicotinate D-ribonucleotide: step 1/1. With respect to regulation, activity is strongly inhibited by galotannin. Inhibited by P1-(adenosine-5')-P4-(nicotinic-acid-riboside-5')-tetraphosphate (Nap4AD). In terms of biological role, catalyzes the formation of NAD(+) from nicotinamide mononucleotide (NMN) and ATP. Can also use the deamidated form; nicotinic acid mononucleotide (NaMN) as substrate with the same efficiency. Can use triazofurin monophosphate (TrMP) as substrate. Can also use GTP and ITP as nucleotide donors. Also catalyzes the reverse reaction, i.e. the pyrophosphorolytic cleavage of NAD(+). For the pyrophosphorolytic activity, can use NAD(+), NADH, NaAD, nicotinic acid adenine dinucleotide phosphate (NHD), nicotinamide guanine dinucleotide (NGD) as substrates. Fails to cleave phosphorylated dinucleotides NADP(+), NADPH and NaADP(+). Protects against axonal degeneration following injury. May be involved in the maintenance of axonal integrity. Also functions as a stress-response chaperone protein that prevents toxic aggregation of proteins; this function may be independent of its NAD(+) synthesis activity. The sequence is that of Nicotinamide/nicotinic acid mononucleotide adenylyltransferase 3 from Mus musculus (Mouse).